The chain runs to 512 residues: GMP synthase [glutamine-hydrolyzing] (512 aa).

One can recognise a Glutamine amidotransferase type-1 domain in the interval 9–198 (GVLVVDFGGQ…WLSLVGAPRT (190 aa)). Catalysis depends on Cys-87, which acts as the Nucleophile. Catalysis depends on residues His-173 and Glu-175. In terms of domain architecture, GMPS ATP-PPase spans 199 to 387 (WRPGDMVSEL…LGVPRELIWK (189 aa)). 226 to 232 (SGGVDST) is a binding site for ATP.

It catalyses the reaction XMP + L-glutamine + ATP + H2O = GMP + L-glutamate + AMP + diphosphate + 2 H(+). It functions in the pathway purine metabolism; GMP biosynthesis; GMP from XMP (L-Gln route): step 1/1. Catalyzes the synthesis of GMP from XMP. The protein is GMP synthase [glutamine-hydrolyzing] (guaA) of Aeropyrum pernix (strain ATCC 700893 / DSM 11879 / JCM 9820 / NBRC 100138 / K1).